A 204-amino-acid chain; its full sequence is Guanine-specific ADP-ribosyl transferase (204 aa).

The N-terminal stretch at 1-42 (MITTSLRRRTAAAVLSLSAVLATTAATAPGAAPAPSAAPAKA) is a signal peptide. Cys46 and Cys76 are disulfide-bonded. Residues 81 to 85 (RSDSR) and Lys98 contribute to the NADH site. Residues 111 to 114 (VLVN), 132 to 134 (WYK), Trp159, and Gln162 contribute to the GDP site. The PN (phosphate-nicotinamide) loop motif lies at 132–136 (WYKSG). Residues Cys180 and Cys194 are joined by a disulfide bond.

It belongs to the pierisin ADP-ribosyltransferase family. As to quaternary structure, monomer.

The protein resides in the secreted. It catalyses the reaction guanosine + NAD(+) = N(2)-(ADP-D-ribosyl)-guanosine + nicotinamide + H(+). It carries out the reaction a 2'-deoxyguanosine in DNA + NAD(+) = an N(2)-(ADP-L-ribosyl)-2'-deoxyguanosine in DNA + nicotinamide + H(+). The enzyme catalyses 2'-deoxyguanosine + NAD(+) = N(2)-(ADP-D-ribosyl)-2'-deoxyguanosine + nicotinamide + H(+). The catalysed reaction is GMP + NAD(+) = N(2)-(ADP-D-ribosyl)-GMP + nicotinamide + H(+). It catalyses the reaction GTP + NAD(+) = N(2)-(ADP-D-ribosyl)-GTP + nicotinamide + H(+). It carries out the reaction dGMP + NAD(+) = N(2)-(ADP-D-ribosyl)-dGMP + nicotinamide + H(+). The enzyme catalyses dGTP + NAD(+) = N(2)-(ADP-D-ribosyl)-dGTP + nicotinamide + H(+). The catalysed reaction is 3',5'-cyclic GMP + NAD(+) = N(2)-(ADP-D-ribosyl)-3',5'-cyclic GMP + nicotinamide + H(+). It catalyses the reaction guanine + NAD(+) = N(2)-(ADP-D-ribosyl)-guanine + nicotinamide + H(+). It carries out the reaction GDP + NAD(+) = N(2)-(ADP-D-ribosyl)-GDP + nicotinamide + H(+). With respect to regulation, inhibited by NADH. Its function is as follows. ADP-ribosylates the N2 amino group of guanosine, deoxyguanosine, GMP, dGMP, cGMP, GTP and dGTP; oligo-guanosine, oligo-deoxyguanosine and tRNA are ADP-ribosylated less efficiently, while dsDNA is a very poor substrate. Also acts on GDP. The sequence is that of Guanine-specific ADP-ribosyl transferase from Streptomyces coelicolor (strain ATCC BAA-471 / A3(2) / M145).